We begin with the raw amino-acid sequence, 64 residues long: Prokaryotic ubiquitin-like protein Pup (64 aa).

Over residues 1-11 (MAQEQTKRTGG) the composition is skewed to basic and acidic residues. Residues 1–38 (MAQEQTKRTGGGDEDDTPGGDGAAGQERREKLAEDTDD) are disordered. The segment at 21–58 (DGAAGQERREKLAEDTDDLLDEIDDVLEENAEDFVRAY) is ARC ATPase binding. Residues 24–52 (AGQERREKLAEDTDDLLDEIDDVLEENAE) are a coiled coil. Deamidated glutamine is present on glutamine 64. Residue glutamine 64 forms an Isoglutamyl lysine isopeptide (Gln-Lys) (interchain with K-? in acceptor proteins) linkage.

This sequence belongs to the prokaryotic ubiquitin-like protein family. Strongly interacts with the proteasome-associated ATPase ARC through a hydrophobic interface; the interacting region of Pup lies in its C-terminal half. There is one Pup binding site per ARC hexamer ring. Post-translationally, is modified by deamidation of its C-terminal glutamine to glutamate by the deamidase Dop, a prerequisite to the subsequent pupylation process.

The protein operates within protein degradation; proteasomal Pup-dependent pathway. Protein modifier that is covalently attached to lysine residues of substrate proteins, thereby targeting them for proteasomal degradation. The tagging system is termed pupylation. The polypeptide is Prokaryotic ubiquitin-like protein Pup (Rhodococcus opacus (strain B4)).